Reading from the N-terminus, the 862-residue chain is Phosphatidic acid phosphohydrolase 1 (862 aa).

Residues 19 to 104 are N-LIP; it reads NPATLSGAID…VPDELLVSPV (86 aa). 2 disordered regions span residues 104-183 and 300-341; these read VMSA…SVEE and GSTL…AGSG. Positions 105 to 117 are enriched in polar residues; sequence MSATSSPPQSPET. 2 positions are modified to phosphoserine: Ser110 and Ser114. Residues 132-143 are compositionally biased toward basic and acidic residues; sequence NENKKKEKKVLE. Low complexity-rich tracts occupy residues 161 to 179 and 300 to 313; these read SETT…TPPD and GSTL…PSGS. The residue at position 168 (Ser168) is a Phosphoserine. The DXDXT motif motif lies at 398–402; it reads DIDGT. N6-acetyllysine is present on Lys496. Position 511 is a phosphoserine (Ser511). Ser602 bears the Phosphoserine; by CDC28 mark. Positions 648 to 732 are disordered; that stretch reads SDISNDDSDN…TPNKSTMSKG (85 aa). Acidic residues predominate over residues 651-663; that stretch reads SNDDSDNIDEDTD. 2 stretches are compositionally biased toward polar residues: residues 664–679 and 687–699; these read VSQQ…NSVK and PQRN…NNNE. Residues 710–730 are compositionally biased toward low complexity; the sequence is ASDLVSSHSSSGSTPNKSTMS. Thr723 carries the phosphothreonine; by CDC28 modification. Ser744 is subject to Phosphoserine; by CDC28. Ser748, Ser773, and Ser774 each carry phosphoserine. Positions 757-780 are disordered; it reads MDDEDSNYNRTKSRRASSAAATSI. Lys801 carries the post-translational modification N6-acetyllysine. The segment at 807 to 862 is disordered; sequence DVHSLGNSDTESRREQSVNETGRNQLPHNSMDDKDLDSRVSDEFDDDEFDEDEFED. Phosphoserine is present on residues Ser810 and Ser814. Residue Thr816 is modified to Phosphothreonine. The span at 824–834 shows a compositional bias: polar residues; the sequence is VNETGRNQLPH. Over residues 836 to 848 the composition is skewed to basic and acidic residues; sequence SMDDKDLDSRVSD. Ser844 and Ser847 each carry phosphoserine. The span at 849–862 shows a compositional bias: acidic residues; sequence EFDDDEFDEDEFED.

Belongs to the lipin family. Requires Mg(2+) as cofactor. Post-translationally, acetylation at Lys-496 and Lys-801 by ESA1 promotes synthesis of diacylglycerol. Phosphorylated by CDC28 at the onset of mitosis, and dephosphorylated by the NEM1-SPO7 complex. Phosphorylation regulates recruitment on promoters of lipid biosynthetic enzymes.

It is found in the cytoplasm. The protein localises to the nucleus membrane. It localises to the endoplasmic reticulum membrane. It catalyses the reaction a 1,2-diacyl-sn-glycero-3-phosphate + H2O = a 1,2-diacyl-sn-glycerol + phosphate. With respect to regulation, phenylglyoxal and propranolol inhibit activity in dose-dependent manners with IC(50) values of 1.3 mM and 0.2 mM, respectively. Sertraline inhibits activity in a dose-dependent manner with an IC(50) value of 85 uM; the inhibitory effects of sertraline and propranolol are additive. Mg(2+)-dependent phosphatidate (PA) phosphatase which catalyzes the dephosphorylation of PA to yield diacylglycerol. Required for de novo lipid synthesis and formation of lipid droplets. Controls transcription of phospholipid biosynthetic genes and nuclear structure by regulating the amount of membrane present at the nuclear envelope. Involved in plasmid maintenance, in respiration and in cell proliferation. The protein is Phosphatidic acid phosphohydrolase 1 (PAH1) of Saccharomyces cerevisiae (strain ATCC 204508 / S288c) (Baker's yeast).